The chain runs to 275 residues: S-formylglutathione hydrolase (275 aa).

Active-site charge relay system residues include S145, D221, and H254.

This sequence belongs to the esterase D family.

It catalyses the reaction S-formylglutathione + H2O = formate + glutathione + H(+). Its function is as follows. Serine hydrolase involved in the detoxification of formaldehyde. Hydrolyzes S-formylglutathione to glutathione and formate. In Haemophilus influenzae (strain ATCC 51907 / DSM 11121 / KW20 / Rd), this protein is S-formylglutathione hydrolase.